We begin with the raw amino-acid sequence, 533 residues long: Beta-apo-4'-carotenal oxygenase (533 aa).

Catalysis depends on residues E226 and C260.

This sequence belongs to the aldehyde dehydrogenase family.

The enzyme catalyses 4'-apo-beta-carotenal + NAD(+) + H2O = neurosporaxanthin + NADH + 2 H(+). In terms of biological role, beta-apo-4'-carotenal oxygenase involved in the last step of synthesis of neurosporaxanthin, a carboxylic apocarotenoid acting as an essential protective pigment and leading to orange pigmentation. Converts the aldehyde beta-apo-4'-carotenal into neurosporaxanthin. Neurosporaxanthin is synthesized from geranyl-geranyl pyrophosphate (GGPP) through several enzymatic activities. Phytoene synthase activity performed by the bifunctional enzyme al-2 first produces phytoene from geranyl-geranyl pyrophosphate (GGPP). The phytoene dehydrogenase al-1 then introduces 5 desaturations to lead to 3,4-didehydrolycopene via the intermediates phytofluene, zeta-carotene, neurosporene and lycopene. Al-2 cyclase activity then converts 3,4-didehydrolycopene into torulene. Al-2 can also convet lycopene into gamma-carotene which in turn is converted to beta-carotene by an additional al-2 cyclization reaction. Torulene is the substrate of the dioxidase cao-2 that breaks the molecule, removing five carbon atoms to yield beta-apo-4'-carotenal, whereas the aldehyde dehydrogenase ylo-1 mediates the last step by converting beta-apo-4'-carotenal into neurosporaxanthin. This is Beta-apo-4'-carotenal oxygenase from Neurospora crassa (strain ATCC 24698 / 74-OR23-1A / CBS 708.71 / DSM 1257 / FGSC 987).